A 205-amino-acid polypeptide reads, in one-letter code: Holliday junction branch migration complex subunit RuvA (205 aa).

The domain I stretch occupies residues 1 to 64 (MIGRLRGIIL…EDAQLLFGFI (64 aa)). Positions 65–143 (HKQERVLFRE…GLSGDLFVPQ (79 aa)) are domain II. Residues 144–156 (GAGEIPAAIDAPA) form a flexible linker region. Residues 157 to 205 (MPADPEGEAVAALVALGYKPQEASRMVSKVASAGSDCEMLIRDALRAAL) form a domain III region.

This sequence belongs to the RuvA family. In terms of assembly, homotetramer. Forms an RuvA(8)-RuvB(12)-Holliday junction (HJ) complex. HJ DNA is sandwiched between 2 RuvA tetramers; dsDNA enters through RuvA and exits via RuvB. An RuvB hexamer assembles on each DNA strand where it exits the tetramer. Each RuvB hexamer is contacted by two RuvA subunits (via domain III) on 2 adjacent RuvB subunits; this complex drives branch migration. In the full resolvosome a probable DNA-RuvA(4)-RuvB(12)-RuvC(2) complex forms which resolves the HJ.

The protein localises to the cytoplasm. Functionally, the RuvA-RuvB-RuvC complex processes Holliday junction (HJ) DNA during genetic recombination and DNA repair, while the RuvA-RuvB complex plays an important role in the rescue of blocked DNA replication forks via replication fork reversal (RFR). RuvA specifically binds to HJ cruciform DNA, conferring on it an open structure. The RuvB hexamer acts as an ATP-dependent pump, pulling dsDNA into and through the RuvAB complex. HJ branch migration allows RuvC to scan DNA until it finds its consensus sequence, where it cleaves and resolves the cruciform DNA. The sequence is that of Holliday junction branch migration complex subunit RuvA from Sodalis glossinidius (strain morsitans).